A 307-amino-acid polypeptide reads, in one-letter code: Methionyl-tRNA formyltransferase (307 aa).

A (6S)-5,6,7,8-tetrahydrofolate-binding site is contributed by 108–111 (SLLP).

Belongs to the Fmt family.

The catalysed reaction is L-methionyl-tRNA(fMet) + (6R)-10-formyltetrahydrofolate = N-formyl-L-methionyl-tRNA(fMet) + (6S)-5,6,7,8-tetrahydrofolate + H(+). Its function is as follows. Attaches a formyl group to the free amino group of methionyl-tRNA(fMet). The formyl group appears to play a dual role in the initiator identity of N-formylmethionyl-tRNA by promoting its recognition by IF2 and preventing the misappropriation of this tRNA by the elongation apparatus. In Xylella fastidiosa (strain M12), this protein is Methionyl-tRNA formyltransferase.